The sequence spans 403 residues: Phosphopentomutase (403 aa).

Mn(2+)-binding residues include D13, D298, H303, D339, H340, and H351.

The protein belongs to the phosphopentomutase family. It depends on Mn(2+) as a cofactor.

It localises to the cytoplasm. The catalysed reaction is 2-deoxy-alpha-D-ribose 1-phosphate = 2-deoxy-D-ribose 5-phosphate. The enzyme catalyses alpha-D-ribose 1-phosphate = D-ribose 5-phosphate. Its pathway is carbohydrate degradation; 2-deoxy-D-ribose 1-phosphate degradation; D-glyceraldehyde 3-phosphate and acetaldehyde from 2-deoxy-alpha-D-ribose 1-phosphate: step 1/2. Its function is as follows. Isomerase that catalyzes the conversion of deoxy-ribose 1-phosphate (dRib-1-P) and ribose 1-phosphate (Rib-1-P) to deoxy-ribose 5-phosphate (dRib-5-P) and ribose 5-phosphate (Rib-5-P), respectively. In Streptococcus equi subsp. zooepidemicus (strain H70), this protein is Phosphopentomutase.